The sequence spans 572 residues: Glypican-5 (572 aa).

The signal sequence occupies residues 1-24 (MDAQTWPVGFRCLLLLALVGSARS). Residues N120 and N237 are each glycosylated (N-linked (GlcNAc...) asparagine). A disordered region spans residues 355-375 (SPRCSFDQSKEKHGMKTTTRN). 5 O-linked (Xyl...) (glycosaminoglycan) serine glycosylation sites follow: S441, S486, S495, S507, and S509. N527 is a glycosylation site (N-linked (GlcNAc...) asparagine).

Belongs to the glypican family. In adult, primarily expressed in the brain. Also detected in fetal brain, lung and liver.

The protein resides in the cell membrane. It is found in the secreted. It localises to the extracellular space. Its function is as follows. Cell surface proteoglycan that bears heparan sulfate. The chain is Glypican-5 (GPC5) from Homo sapiens (Human).